The chain runs to 586 residues: CTP synthase (586 aa).

An amidoligase domain region spans residues Met1–Ile265. CTP is bound at residue Ser13. Ser13 serves as a coordination point for UTP. ATP-binding positions include Ser14 to Ile19 and Asp71. Residues Asp71 and Glu139 each contribute to the Mg(2+) site. Residues Asp146 to Glu148, Lys186 to Gln191, and Lys222 each bind CTP. UTP contacts are provided by residues Lys186–Gln191 and Lys222. Residues Lys290 to Ser582 form the Glutamine amidotransferase type-1 domain. Gly352 is an L-glutamine binding site. The active-site Nucleophile; for glutamine hydrolysis is Cys379. L-glutamine-binding positions include Phe380–Gln383 and Glu403. The 45-residue stretch at Ala429–Ser473 folds into the RPE1 insert domain. Residue Arg510 participates in L-glutamine binding. Active-site residues include His555 and Glu557.

This sequence belongs to the CTP synthase family. Homotetramer.

The catalysed reaction is UTP + L-glutamine + ATP + H2O = CTP + L-glutamate + ADP + phosphate + 2 H(+). The enzyme catalyses L-glutamine + H2O = L-glutamate + NH4(+). It carries out the reaction UTP + NH4(+) + ATP = CTP + ADP + phosphate + 2 H(+). Its pathway is pyrimidine metabolism; CTP biosynthesis via de novo pathway; CTP from UDP: step 2/2. With respect to regulation, allosterically activated by GTP, when glutamine is the substrate; GTP has no effect on the reaction when ammonia is the substrate. The allosteric effector GTP functions by stabilizing the protein conformation that binds the tetrahedral intermediate(s) formed during glutamine hydrolysis. Inhibited by the product CTP, via allosteric rather than competitive inhibition. Catalyzes the ATP-dependent amination of UTP to CTP with either L-glutamine or ammonia as the source of nitrogen. Regulates intracellular CTP levels through interactions with the four ribonucleotide triphosphates. The polypeptide is CTP synthase (Rickettsia prowazekii (strain Madrid E)).